The following is a 124-amino-acid chain: Large ribosomal subunit protein bL12 (124 aa).

This sequence belongs to the bacterial ribosomal protein bL12 family. As to quaternary structure, homodimer. Part of the ribosomal stalk of the 50S ribosomal subunit. Forms a multimeric L10(L12)X complex, where L10 forms an elongated spine to which 2 to 4 L12 dimers bind in a sequential fashion. Binds GTP-bound translation factors.

Its function is as follows. Forms part of the ribosomal stalk which helps the ribosome interact with GTP-bound translation factors. Is thus essential for accurate translation. The protein is Large ribosomal subunit protein bL12 of Herminiimonas arsenicoxydans.